Reading from the N-terminus, the 208-residue chain is uncharacterized protein (208 aa).

Basic and acidic residues predominate over residues 1–18 (MSPTKDSHPSPHFPRDSG). Disordered stretches follow at residues 1-122 (MSPT…LPPP) and 135-208 (RECH…TPDG).

This is an uncharacterized protein from Homo sapiens (Human).